The primary structure comprises 132 residues: Nickel-responsive regulator (132 aa).

Residues His76, His87, His89, and Cys95 each coordinate Ni(2+).

This sequence belongs to the transcriptional regulatory CopG/NikR family. Homotetramer. Ni(2+) is required as a cofactor.

In terms of biological role, transcriptional repressor of the nikABCDE operon. Is active in the presence of excessive concentrations of intracellular nickel. This chain is Nickel-responsive regulator, found in Klebsiella pneumoniae (strain 342).